We begin with the raw amino-acid sequence, 377 residues long: Spermidine/putrescine import ATP-binding protein PotA (377 aa).

The 231-residue stretch at 22-252 (VRLQNVTKRF…PANRFVADFI (231 aa)) folds into the ABC transporter domain. Residue 54–61 (GPSGCGKT) coordinates ATP.

The protein belongs to the ABC transporter superfamily. Spermidine/putrescine importer (TC 3.A.1.11.1) family. As to quaternary structure, the complex is composed of two ATP-binding proteins (PotA), two transmembrane proteins (PotB and PotC) and a solute-binding protein (PotD).

The protein localises to the cell membrane. The catalysed reaction is ATP + H2O + polyamine-[polyamine-binding protein]Side 1 = ADP + phosphate + polyamineSide 2 + [polyamine-binding protein]Side 1.. Its function is as follows. Part of the ABC transporter complex PotABCD involved in spermidine/putrescine import. Responsible for energy coupling to the transport system. This chain is Spermidine/putrescine import ATP-binding protein PotA, found in Rubrobacter xylanophilus (strain DSM 9941 / JCM 11954 / NBRC 16129 / PRD-1).